A 144-amino-acid polypeptide reads, in one-letter code: 3-hydroxyacyl-[acyl-carrier-protein] dehydratase FabZ (144 aa).

His51 is an active-site residue.

The protein belongs to the thioester dehydratase family. FabZ subfamily.

It is found in the cytoplasm. The catalysed reaction is a (3R)-hydroxyacyl-[ACP] = a (2E)-enoyl-[ACP] + H2O. Functionally, involved in unsaturated fatty acids biosynthesis. Catalyzes the dehydration of short chain beta-hydroxyacyl-ACPs and long chain saturated and unsaturated beta-hydroxyacyl-ACPs. The protein is 3-hydroxyacyl-[acyl-carrier-protein] dehydratase FabZ of Clostridium botulinum (strain Loch Maree / Type A3).